The following is a 148-amino-acid chain: MASFFRTAVRGPSAGLFRAVARPQPIAARVSLFSTSSRFRSEHHEETFEEFTARYEKEFDAVQDVFELQRNLNNAFAYDLVPSPSVLAAALKAARRVNDFPTAVRVFEGIKAKVENKGQYEQYLAELKPLREELGITLKEDLYPEEAN.

A mitochondrion-targeting transit peptide spans 1-40 (MASFFRTAVRGPSAGLFRAVARPQPIAARVSLFSTSSRFR).

The protein belongs to the cytochrome c oxidase subunit 5A family. Component of the cytochrome c oxidase (complex IV, CIV), a multisubunit enzyme composed of 11 subunits. The complex is composed of a catalytic core of 3 subunits Cox1, Cox2 and Cox3, encoded in the mitochondrial DNA, and 8 supernumerary subunits Cox4, Cox5a/Cox5, Cox6, Cox7, Cox8, Cox7a/Cox9, Cox6b/Cox12 and Cox6a/Cox13, which are encoded in the nuclear genome. The complex exists as a monomer or a dimer and forms respiratory supercomplexes (SCs) in the inner mitochondrial membrane with NADH-ubiquinone oxidoreductase (complex I, CI) and ubiquinol-cytochrome c oxidoreductase (cytochrome b-c1 complex, complex III, CIII), resulting in various different assemblies (supercomplexes I(1)IV(1), I(1)III(3)IV(2), III(2)IV(1) and III(2)IV(2) as well as larger supercomplexes of compositions like I(1)III(2)IV(5-6)).

It is found in the mitochondrion inner membrane. Its pathway is energy metabolism; oxidative phosphorylation. In terms of biological role, component of the cytochrome c oxidase, the last enzyme in the mitochondrial electron transport chain which drives oxidative phosphorylation. The respiratory chain contains 3 multisubunit complexes succinate dehydrogenase (complex II, CII), ubiquinol-cytochrome c oxidoreductase (cytochrome b-c1 complex, complex III, CIII) and cytochrome c oxidase (complex IV, CIV), that cooperate to transfer electrons derived from NADH and succinate to molecular oxygen, creating an electrochemical gradient over the inner membrane that drives transmembrane transport and the ATP synthase. Cytochrome c oxidase is the component of the respiratory chain that catalyzes the reduction of oxygen to water. Electrons originating from reduced cytochrome c in the intermembrane space (IMS) are transferred via the dinuclear copper A center (CU(A)) of Cox2 and heme A of Cox1 to the active site in Cox1, a binuclear center (BNC) formed by heme A3 and copper B (CU(B)). The BNC reduces molecular oxygen to 2 water molecules using 4 electrons from cytochrome c in the IMS and 4 protons from the mitochondrial matrix. This chain is Cytochrome c oxidase subunit 6, mitochondrial (cox-6), found in Neurospora crassa (strain ATCC 24698 / 74-OR23-1A / CBS 708.71 / DSM 1257 / FGSC 987).